Here is a 71-residue protein sequence, read N- to C-terminus: IRCFITPDITSKDCPNGHVCYTKTWCDGFCSIRGERVDLDGCAATCPTVTGVDIQCCSTDNCNPFPTRKRP.

5 disulfide bridges follow: cysteine 3/cysteine 20, cysteine 14/cysteine 42, cysteine 26/cysteine 30, cysteine 46/cysteine 56, and cysteine 57/cysteine 62.

The protein belongs to the three-finger toxin family. Long-chain subfamily. Type II alpha-neurotoxin sub-subfamily. As to expression, expressed by the venom gland.

It is found in the secreted. In terms of biological role, nicotinic acetylcholine receptor antagonist. Binds to muscle nicotinic acetylcholine receptor (nAChR) and inhibits acetylcholine from binding to the receptor, thereby impairing neuromuscular transmission. Produces peripheral paralysis by blocking neuromuscular transmission at the postsynaptic site. Induces concentration-dependent inhibition of indirect twitches and abolishes contractile responses of tissues to exogenous acetylcholine and carbachol, in the chick biventer cervicis nerve-muscle preparation at 100-300 nM (in vitro). Prior incubation of tissues with Indian polyvalent antivenom (1 ml/0.6 mg) prevents the neurotoxic effects at 100 nM (in vitro). Addition of Indian polyvalent antivenom (1 ml/0.6 mg) at the t90 time point partially restores the neurotoxic effects (in vitro). Displays a reversible antagonism of concentration-response curves to carbachol, with a pA2 of 8.17 (in vitro). The polypeptide is Alpha-elapitoxin-Nn3a (Naja naja (Indian cobra)).